The chain runs to 169 residues: Phosphopantetheine adenylyltransferase (169 aa).

Threonine 14 is a substrate binding site. Residues threonine 14–phenylalanine 15 and histidine 22 each bind ATP. Lysine 46, leucine 78, and arginine 92 together coordinate substrate. Residues glycine 93 to arginine 95, glutamate 103, and histidine 128 to serine 134 contribute to the ATP site.

This sequence belongs to the bacterial CoaD family. As to quaternary structure, homohexamer. The cofactor is Mg(2+).

Its subcellular location is the cytoplasm. The enzyme catalyses (R)-4'-phosphopantetheine + ATP + H(+) = 3'-dephospho-CoA + diphosphate. Its pathway is cofactor biosynthesis; coenzyme A biosynthesis; CoA from (R)-pantothenate: step 4/5. Its function is as follows. Reversibly transfers an adenylyl group from ATP to 4'-phosphopantetheine, yielding dephospho-CoA (dPCoA) and pyrophosphate. The sequence is that of Phosphopantetheine adenylyltransferase from Stenotrophomonas maltophilia (strain R551-3).